Reading from the N-terminus, the 253-residue chain is MSGHNKWANIKHRKMAQDAKKSKIFTKLIREIIVAAREGGGNIETNPRLRAAVEKARAENMPKENIERAIKRGTGELEGVDYQEVIYEGYAPGGVAVYIRALTDNKNRTAQELRHLFNKYGGSLAESGSVSWIFERKGVIEIPRDKVKDLEELMMIAIDAGAEDIKDTEDPIQIITTPENLSEVKSKLEEAGYEVEAKVTFIPKNTMKVTGKDAEKVLEFLNALEDMDDVQEVYSNFEMDDKEMEEILSRLEG.

The protein belongs to the TACO1 family.

The protein localises to the cytoplasm. The polypeptide is Probable transcriptional regulatory protein Tpet_0454 (Thermotoga petrophila (strain ATCC BAA-488 / DSM 13995 / JCM 10881 / RKU-1)).